We begin with the raw amino-acid sequence, 94 residues long: Small polypeptide ROTUNDIFOLIA LIKE 1 (94 aa).

Residues 1–13 show a composition bias toward polar residues; it reads MRQCASASSSTSR. A disordered region spans residues 1–26; it reads MRQCASASSSTSRPPEAAGEEGKRRR. Positions 28–59 are required for DVL/RTFL small polypeptide activity; sequence RRGWLLQAAAREQRSRFYIFRRCVAMLLCWYK. The chain crosses the membrane as a helical span at residues 63 to 82; it reads ITPYNVVPLGIYGLVWFATM.

The protein belongs to the DVL/RTFL small polypeptides family.

Its subcellular location is the cell membrane. Functionally, small polypeptide acting as a regulatory molecule which coordinates cellular responses required for differentiation, growth and development, probably by restricting polar cell proliferation in lateral organs. In Oryza sativa subsp. japonica (Rice), this protein is Small polypeptide ROTUNDIFOLIA LIKE 1.